A 75-amino-acid chain; its full sequence is U6-lycotoxin-Ls1d (75 aa).

Residues M1–A21 form the signal peptide. A propeptide spanning residues E22 to R25 is cleaved from the precursor.

Belongs to the neurotoxin 19 (CSTX) family. 06 (U6-Lctx) subfamily. In terms of processing, contains 4 disulfide bonds. In terms of tissue distribution, expressed by the venom gland.

The protein resides in the secreted. This chain is U6-lycotoxin-Ls1d, found in Lycosa singoriensis (Wolf spider).